A 490-amino-acid polypeptide reads, in one-letter code: Protein nucleotidyltransferase YdiU (490 aa).

ATP-binding residues include Gly94, Gly96, Arg97, Lys117, Asp129, Gly130, Arg180, and Arg187. Asp256 serves as the catalytic Proton acceptor. The Mg(2+) site is built by Asn257 and Asp266. Residue Asp266 participates in ATP binding.

The protein belongs to the SELO family. Mg(2+) serves as cofactor. Requires Mn(2+) as cofactor.

The enzyme catalyses L-seryl-[protein] + ATP = 3-O-(5'-adenylyl)-L-seryl-[protein] + diphosphate. It catalyses the reaction L-threonyl-[protein] + ATP = 3-O-(5'-adenylyl)-L-threonyl-[protein] + diphosphate. The catalysed reaction is L-tyrosyl-[protein] + ATP = O-(5'-adenylyl)-L-tyrosyl-[protein] + diphosphate. It carries out the reaction L-histidyl-[protein] + UTP = N(tele)-(5'-uridylyl)-L-histidyl-[protein] + diphosphate. The enzyme catalyses L-seryl-[protein] + UTP = O-(5'-uridylyl)-L-seryl-[protein] + diphosphate. It catalyses the reaction L-tyrosyl-[protein] + UTP = O-(5'-uridylyl)-L-tyrosyl-[protein] + diphosphate. Nucleotidyltransferase involved in the post-translational modification of proteins. It can catalyze the addition of adenosine monophosphate (AMP) or uridine monophosphate (UMP) to a protein, resulting in modifications known as AMPylation and UMPylation. The chain is Protein nucleotidyltransferase YdiU from Clostridium perfringens (strain ATCC 13124 / DSM 756 / JCM 1290 / NCIMB 6125 / NCTC 8237 / Type A).